The chain runs to 24 residues: GNAPAADMVLKAPGDAKMTKTAVP.

Residues 1–24 form a disordered region; that stretch reads GNAPAADMVLKAPGDAKMTKTAVP.

Binds 4 heme groups per subunit.

It localises to the periplasm. Participates in sulfate respiration coupled with phosphorylation by transferring electrons from the enzyme dehydrogenase to ferredoxin. The polypeptide is Cytochrome c3-2 (Nitratidesulfovibrio vulgaris (Desulfovibrio vulgaris)).